Consider the following 290-residue polypeptide: S-methyl-5'-thioadenosine phosphorylase (290 aa).

Phosphate-binding positions include serine 11, 53–54 (RH), and 86–87 (SA). Methionine 184 is a binding site for substrate. Position 185 (threonine 185) interacts with phosphate. 208–210 (DYD) contacts substrate.

The protein belongs to the PNP/MTAP phosphorylase family. MTAP subfamily. As to quaternary structure, homohexamer. Dimer of a homotrimer.

It carries out the reaction S-methyl-5'-thioadenosine + phosphate = 5-(methylsulfanyl)-alpha-D-ribose 1-phosphate + adenine. It functions in the pathway amino-acid biosynthesis; L-methionine biosynthesis via salvage pathway; S-methyl-5-thio-alpha-D-ribose 1-phosphate from S-methyl-5'-thioadenosine (phosphorylase route): step 1/1. Catalyzes the reversible phosphorylation of S-methyl-5'-thioadenosine (MTA) to adenine and 5-methylthioribose-1-phosphate. Involved in the breakdown of MTA, a major by-product of polyamine biosynthesis. Responsible for the first step in the methionine salvage pathway after MTA has been generated from S-adenosylmethionine. Has broad substrate specificity with 6-aminopurine nucleosides as preferred substrates. The protein is S-methyl-5'-thioadenosine phosphorylase of Cereibacter sphaeroides (strain ATCC 17023 / DSM 158 / JCM 6121 / CCUG 31486 / LMG 2827 / NBRC 12203 / NCIMB 8253 / ATH 2.4.1.) (Rhodobacter sphaeroides).